The following is a 167-amino-acid chain: MHCVPLFCFLWFCHHLYYSQAVPIRKVQDDTKTLTKTIITRINDISHMYSISAKQRVTGLDFIPGLHPFQSLSDMDQTLAIYQQILSNLSSRNMVQISNDLENLRDLLHLLGSLKSCPFDEAGGLSALGNLEGVMEASLYSTEVVTLTRLQKSLYVMLQQLDLIHGC.

An N-terminal signal peptide occupies residues 1-21 (MHCVPLFCFLWFCHHLYYSQA). C117 and C167 are disulfide-bonded.

The protein belongs to the leptin family.

The protein localises to the secreted. Functionally, key player in the regulation of energy balance and body weight control. Once released into the circulation, has central and peripheral effects by binding LEPR, found in many tissues, which results in the activation of several major signaling pathways. In the hypothalamus, acts as an appetite-regulating factor that induces a decrease in food intake and an increase in energy consumption by inducing anorexinogenic factors and suppressing orexigenic neuropeptides, also regulates bone mass and secretion of hypothalamo-pituitary-adrenal hormones. In the periphery, increases basal metabolism, influences reproductive function, regulates pancreatic beta-cell function and insulin secretion, is pro-angiogenic for endothelial cell and affects innate and adaptive immunity. In the arcuate nucleus of the hypothalamus, activates by depolarization POMC neurons inducing FOS and SOCS3 expression to release anorexigenic peptides and inhibits by hyperpolarization NPY neurons inducing SOCS3 with a consequent reduction on release of orexigenic peptides. In addition to its known satiety inducing effect, has a modulatory role in nutrient absorption. In the intestine, reduces glucose absorption by enterocytes by activating PKC and leading to a sequential activation of p38, PI3K and ERK signaling pathways which exerts an inhibitory effect on glucose absorption. Acts as a growth factor on certain tissues, through the activation of different signaling pathways increases expression of genes involved in cell cycle regulation such as CCND1, via JAK2-STAT3 pathway, or VEGFA, via MAPK1/3 and PI3K-AKT1 pathways. May also play an apoptotic role via JAK2-STAT3 pathway and up-regulation of BIRC5 expression. Pro-angiogenic, has mitogenic activity on vascular endothelial cells and plays a role in matrix remodeling by regulating the expression of matrix metalloproteinases (MMPs) and tissue inhibitors of metalloproteinases (TIMPs). In innate immunity, modulates the activity and function of neutrophils by increasing chemotaxis and the secretion of oxygen radicals. Increases phagocytosis by macrophages and enhances secretion of pro-inflammatory mediators. Increases cytotoxic ability of NK cells. Plays a pro-inflammatory role, in synergy with IL1B, by inducing NOS2 which promotes the production of IL6, IL8 and Prostaglandin E2, through a signaling pathway that involves JAK2, PI3K, MAP2K1/MEK1 and MAPK14/p38. In adaptive immunity, promotes the switch of memory T-cells towards T helper-1 cell immune responses. Increases CD4(+)CD25(-) T-cell proliferation and reduces autophagy during TCR (T-cell receptor) stimulation, through MTOR signaling pathway activation and BCL2 up-regulation. This Sminthopsis crassicaudata (Fat-tailed dunnart) protein is Leptin (LEP).